A 250-amino-acid chain; its full sequence is MANIHIVIPARLKSTRLPNKMLADIAGKPMIQRVYEQVAKSKFDSIIIATDSQKIKDIAESFGAKVVLTRDDHQSGTDRIAEAVTKLGFADEDIVVNVQGDEPLIPIENIEQAAQLLIDKSEAVVSTLCEKITDVEDIYNPNNVKVVFDKNNYALYFSRASIPFERGFSEKEQINISEFFRHIGIYAYRVAFLKHYAELTVSPIEKYEALEQLRVLYNGYKIAIEQSAKSTPAGVDTLQDLEKVRRLFNV.

Belongs to the KdsB family.

The protein resides in the cytoplasm. The catalysed reaction is 3-deoxy-alpha-D-manno-oct-2-ulosonate + CTP = CMP-3-deoxy-beta-D-manno-octulosonate + diphosphate. The protein operates within nucleotide-sugar biosynthesis; CMP-3-deoxy-D-manno-octulosonate biosynthesis; CMP-3-deoxy-D-manno-octulosonate from 3-deoxy-D-manno-octulosonate and CTP: step 1/1. It participates in bacterial outer membrane biogenesis; lipopolysaccharide biosynthesis. In terms of biological role, activates KDO (a required 8-carbon sugar) for incorporation into bacterial lipopolysaccharide in Gram-negative bacteria. This chain is 3-deoxy-manno-octulosonate cytidylyltransferase, found in Francisella tularensis subsp. novicida (strain U112).